The primary structure comprises 687 residues: MSKELLLEIGAEEIPAGFVPKALASLEEMIRKELETARLCFDAIVTMGTPRRLTLHIKGLPVIQPDAELTAMGPSKKAAFDADGKPTKAAEGFARGQGVDVSALQVISTDKGEYLAVTRQETGRPTHELLAEILPRLVAGIPFKKSMRWADLDIRFARPVHWIVALFDGIVVPFSFGPIQSGNISRGHRFMANSTFPVRDFAHYLDECERHFVIVDQERRKETIRKETHRVAKTTGGHLLPDESLLEEVTYLVEYPSAIIGSIPAEFLVVPKEVLITSMRSHQRYFSVVDENGKLLPYFITIPNTLAEDPAVVVRGNERVLRARLSDARFFFDEDRKLRLESRVESLKSVVYQQKLGTSYEKMERFRALAEQLAEQLNPAAKQQAARTAFLCKADLVSGMVGEFPEVQGIMGREYALHDGEETAVANAIAEHYLPTQAGGDLPASDIGAFVSLADKLDTLCGCFGVGLIPTGAADPYALRRATIGMISIILDKGYSLSLSGLIDKSLELLAAKLTRPRDEVRHDVLEFFRGRFVNLQGNAYPADVVEAAMAAGFDDLADCAERIRALDTFRQRDDFQPLTVAFKRVCNIIKEGIDAPVAPALFQDEAEHTLYRVLQETKLSASDKIQQQQYLEALTDIAGLKWAVDAFFDAVMVMAEDSAVRNNRLALLTTINRLFSRIADFGRLAG.

Belongs to the class-II aminoacyl-tRNA synthetase family. Tetramer of two alpha and two beta subunits.

It localises to the cytoplasm. It catalyses the reaction tRNA(Gly) + glycine + ATP = glycyl-tRNA(Gly) + AMP + diphosphate. This chain is Glycine--tRNA ligase beta subunit, found in Trichlorobacter lovleyi (strain ATCC BAA-1151 / DSM 17278 / SZ) (Geobacter lovleyi).